The sequence spans 506 residues: Galactose/methyl galactoside import ATP-binding protein MglA (506 aa).

ABC transporter domains lie at 14-249 (LEMR…VGRS) and 259-506 (NKPG…SLHL). 46-53 (GENGAGKS) is a binding site for ATP.

This sequence belongs to the ABC transporter superfamily. Galactose/methyl galactoside importer (TC 3.A.1.2.3) family. In terms of assembly, the complex is composed of one ATP-binding protein (MglA), two transmembrane proteins (MglC) and a solute-binding protein (MglB).

Its subcellular location is the cell inner membrane. The enzyme catalyses D-galactose(out) + ATP + H2O = D-galactose(in) + ADP + phosphate + H(+). It carries out the reaction methyl beta-D-galactoside(out) + ATP + H2O = methyl beta-D-galactoside(in) + ADP + phosphate + H(+). Its activity is regulated as follows. Stimulated 3-fold by galactose and inhibited by vanadate, N-ethylmaleimide, and 5-methoxyindole-2-carboxylic acid. Functionally, part of the ABC transporter complex MglABC involved in galactose/methyl galactoside import. Responsible for energy coupling to the transport system. This chain is Galactose/methyl galactoside import ATP-binding protein MglA, found in Salmonella typhimurium (strain LT2 / SGSC1412 / ATCC 700720).